Consider the following 273-residue polypeptide: Dermonecrotic toxin LdSicTox-alphaIB3b (273 aa).

Histidine 5 is an active-site residue. Glutamate 25 and aspartate 27 together coordinate Mg(2+). Histidine 41 serves as the catalytic Nucleophile. Intrachain disulfides connect cysteine 45–cysteine 51 and cysteine 47–cysteine 190. Position 85 (aspartate 85) interacts with Mg(2+).

This sequence belongs to the arthropod phospholipase D family. Class II subfamily. The cofactor is Mg(2+). As to expression, expressed by the venom gland.

Its subcellular location is the secreted. The catalysed reaction is an N-(acyl)-sphingosylphosphocholine = an N-(acyl)-sphingosyl-1,3-cyclic phosphate + choline. It carries out the reaction an N-(acyl)-sphingosylphosphoethanolamine = an N-(acyl)-sphingosyl-1,3-cyclic phosphate + ethanolamine. The enzyme catalyses a 1-acyl-sn-glycero-3-phosphocholine = a 1-acyl-sn-glycero-2,3-cyclic phosphate + choline. It catalyses the reaction a 1-acyl-sn-glycero-3-phosphoethanolamine = a 1-acyl-sn-glycero-2,3-cyclic phosphate + ethanolamine. Its function is as follows. Dermonecrotic toxins cleave the phosphodiester linkage between the phosphate and headgroup of certain phospholipids (sphingolipid and lysolipid substrates), forming an alcohol (often choline) and a cyclic phosphate. This toxin acts on sphingomyelin (SM). It may also act on ceramide phosphoethanolamine (CPE), lysophosphatidylcholine (LPC) and lysophosphatidylethanolamine (LPE), but not on lysophosphatidylserine (LPS), and lysophosphatidylglycerol (LPG). It acts by transphosphatidylation, releasing exclusively cyclic phosphate products as second products. Induces dermonecrosis, hemolysis, increased vascular permeability, edema, inflammatory response, and platelet aggregation. In Loxosceles deserta (Desert recluse spider), this protein is Dermonecrotic toxin LdSicTox-alphaIB3b.